The following is an 852-amino-acid chain: Replication factor C small subunit (852 aa).

The DOD-type homing endonuclease domain occupies 183–306 (WLGYFMGSGY…IAYALASFGI (124 aa)).

Belongs to the activator 1 small subunits family. RfcS subfamily. As to quaternary structure, heteromultimer composed of three to four small subunits (RfcS) and one to two large subunits (RfcL). This protein undergoes a protein self splicing that involves a post-translational excision of the intervening region (intein) followed by peptide ligation.

In terms of biological role, part of the RFC clamp loader complex which loads the PCNA sliding clamp onto DNA. The complex possesses DNA-dependent ATPase activity which is further stimulated by PCNA. This Pyrococcus furiosus (strain ATCC 43587 / DSM 3638 / JCM 8422 / Vc1) protein is Replication factor C small subunit (rfcS).